Consider the following 199-residue polypeptide: Protein GrpE (199 aa).

Residues 1 to 24 show a composition bias toward basic and acidic residues; sequence MSKQNKKDWKKFKDEHKEEHKVEN. Residues 1–52 form a disordered region; the sequence is MSKQNKKDWKKFKDEHKEEHKVENEILEEETDEESQHQEPALGHPSYTALEE.

Belongs to the GrpE family. In terms of assembly, homodimer.

It localises to the cytoplasm. Participates actively in the response to hyperosmotic and heat shock by preventing the aggregation of stress-denatured proteins, in association with DnaK and GrpE. It is the nucleotide exchange factor for DnaK and may function as a thermosensor. Unfolded proteins bind initially to DnaJ; upon interaction with the DnaJ-bound protein, DnaK hydrolyzes its bound ATP, resulting in the formation of a stable complex. GrpE releases ADP from DnaK; ATP binding to DnaK triggers the release of the substrate protein, thus completing the reaction cycle. Several rounds of ATP-dependent interactions between DnaJ, DnaK and GrpE are required for fully efficient folding. The protein is Protein GrpE of Legionella pneumophila.